Reading from the N-terminus, the 90-residue chain is Small ribosomal subunit protein uS15 (90 aa).

The protein belongs to the universal ribosomal protein uS15 family. Part of the 30S ribosomal subunit. Forms a bridge to the 50S subunit in the 70S ribosome, contacting the 23S rRNA.

Functionally, one of the primary rRNA binding proteins, it binds directly to 16S rRNA where it helps nucleate assembly of the platform of the 30S subunit by binding and bridging several RNA helices of the 16S rRNA. Forms an intersubunit bridge (bridge B4) with the 23S rRNA of the 50S subunit in the ribosome. This chain is Small ribosomal subunit protein uS15, found in Campylobacter jejuni subsp. doylei (strain ATCC BAA-1458 / RM4099 / 269.97).